The primary structure comprises 353 residues: O-antigen biosynthesis glycosyltransferase WclY (353 aa).

A helical membrane pass occupies residues 116–136 (SLIGGLLWCSIWLFFDKLVIL). UDP-binding residues include asparagine 190 and glutamate 271. An E(x7)E motif is present at residues 263-271 (EGFGLTVLE).

It belongs to the glycosyltransferase group 1 family. Glycosyltransferase 4 subfamily.

The protein resides in the membrane. The protein operates within bacterial outer membrane biogenesis; LPS O-antigen biosynthesis. Activated by 5mM MnCl(2) and MgCl(2). No significant effect on activity by 5 mM ethylenediaminetetraacetic acid (EDTA), 0.125-0.5% Triton X-100 or dithiothreitol (DTT). Inhibited by 5 mM Zn-acetate. Functionally, involved in the assembly of the O-repeating unit during O-antigen biosynthesis. Glucosyltransferase accountable for the alpha-D-Glc-1,4-beta-D-Gal linkage within the O-antigen. Transfers alpha-1,4-Glc to the Gal moiety of a specific Gal-beta1-3GalNAc-alpha-OPO3-PO3-phenoxyundecyl (Gal-beta1-3GalNAc-PP-PhU) synthetic natural acceptor substrate analog. Requires both Gal-beta1-3GalNAc-alpha and the diphosphate moiety in the acceptor. Not active with GalNAc-PP-PhU, GlcNAc-PP-PhU, Gal-beta1-3GalNAc-alpha-O-benzyl, D-Rha-alpha1-3GlcNAc-alpha-PP-PhU or D-Man-alpha1-3Man-alpha-5-benzamidopentyl (BAP), nor with glycopeptides TTTVTP (Gal-beta1-3GalNAc-alpha-)TPTG or TT (Gal-beta1-3GalNAc-alpha-)TVTPTPTG as acceptor substrates. Has a broad nucleotide sugar donor substrate specificity with ADP-Glc, TDP-Glc and UDP-Glc as superior donors. Gal, GlcNAc, and GalNAc residues are transferred from UDP-sugars, but with low activity. UDP-Xyl, UDP-GlcA, GDP-Fuc or GDP-K-Rha do not act as donors. In Escherichia coli, this protein is O-antigen biosynthesis glycosyltransferase WclY.